Reading from the N-terminus, the 97-residue chain is uncharacterized protein (97 aa).

Disordered regions lie at residues 1-20 (MTEG…IASD) and 52-97 (VPAA…GRRA).

This is an uncharacterized protein from Paracoccus pantotrophus (Thiosphaera pantotropha).